The following is a 590-amino-acid chain: MFLIFFLFFIMFGFISGSFMFGRNFLSFWLSLVMIIFIVLCMIFSFLMVSVCLYGYYYYDFCLILMLDFCFIWLTYVCSGFYMFIMLLINMVFCFIVFYAFYYMYFDMLLGRFLIIFWIFVVCMNLFILSYDFLTAYCGWELLGLFSFFLISYFWYRFFALKFGFKAFFIGKIGDVLLIFAFSIIFLSNGFCMTTFYFLNFFCMDYYYIEFSICLLVGCAFTKSTQFGLHIWLPDAMEGPIPVSALIHAATLVVCGIILLSFVYWCFDFWFSYFYNLIGWSTLILILMTLCVFYNFDVKRYVAFSTICQISFSMFCCLCIDIYIGSLFFCYHMFYKATLFIVLGIWIHIFFGLQDLRCYFFMYFCGCVLARLLLIFAILNSCSIWFLCGFYCKDMLLALLMLLSFYNIIEFLFISIIFIFFTMIYNYFLLFFLMFVFKCFCLVDCLFLLFDYECCLVYCLISLYMCILSIFFIIDFVCIFVFSSYCVFWSFFLNFYNFFDIAIFVVFLILSVGFLYYGCLFFYFFNIDCIMLFWRIFFVIIILVVFMIFCCWYFVCMIIFMLLFVWNFVIYFRYNLKYCLFFCILWILYV.

18 helical membrane passes run 1–21 (MFLI…SFMF), 28–48 (FWLS…SFLM), 58–78 (YYDF…TYVC), 81–101 (FYMF…FYAF), 113–133 (FLII…SYDF), 136–156 (AYCG…YFWY), 176–198 (VLLI…TFYF), 245–265 (ALIH…FVYW), 273–293 (YFYN…LCVF), 310–330 (ISFS…LFFC), 333–353 (MFYK…FFGL), 372–392 (LLLI…GFYC), 395–415 (MLLA…LFIS), 428–450 (FLLF…FLLF), 461–481 (ISLY…CIFV), 501–521 (IAIF…GCLF), 536–556 (IFFV…YFVC), and 568–588 (FVIY…LWIL).

This sequence belongs to the complex I subunit 5 family.

Its subcellular location is the mitochondrion inner membrane. The catalysed reaction is a ubiquinone + NADH + 5 H(+)(in) = a ubiquinol + NAD(+) + 4 H(+)(out). Its function is as follows. Core subunit of the mitochondrial membrane respiratory chain NADH dehydrogenase (Complex I) that is believed to belong to the minimal assembly required for catalysis. Complex I functions in the transfer of electrons from NADH to the respiratory chain. The immediate electron acceptor for the enzyme is believed to be ubiquinone. The sequence is that of NADH-ubiquinone oxidoreductase chain 5 (ND5) from Trypanosoma brucei brucei.